The following is a 156-amino-acid chain: 6,7-dimethyl-8-ribityllumazine synthase (156 aa).

5-amino-6-(D-ribitylamino)uracil is bound by residues F22, 57–59 (AYE), and 81–83 (TVI). 86 to 87 (GT) contacts (2S)-2-hydroxy-3-oxobutyl phosphate. H89 functions as the Proton donor in the catalytic mechanism. Position 114 (F114) interacts with 5-amino-6-(D-ribitylamino)uracil. R128 is a binding site for (2S)-2-hydroxy-3-oxobutyl phosphate.

Belongs to the DMRL synthase family. In terms of assembly, forms an icosahedral capsid composed of 60 subunits, arranged as a dodecamer of pentamers.

It carries out the reaction (2S)-2-hydroxy-3-oxobutyl phosphate + 5-amino-6-(D-ribitylamino)uracil = 6,7-dimethyl-8-(1-D-ribityl)lumazine + phosphate + 2 H2O + H(+). It functions in the pathway cofactor biosynthesis; riboflavin biosynthesis; riboflavin from 2-hydroxy-3-oxobutyl phosphate and 5-amino-6-(D-ribitylamino)uracil: step 1/2. In terms of biological role, catalyzes the formation of 6,7-dimethyl-8-ribityllumazine by condensation of 5-amino-6-(D-ribitylamino)uracil with 3,4-dihydroxy-2-butanone 4-phosphate. This is the penultimate step in the biosynthesis of riboflavin. This is 6,7-dimethyl-8-ribityllumazine synthase from Cronobacter sakazakii (strain ATCC BAA-894) (Enterobacter sakazakii).